The primary structure comprises 356 residues: Arginine kinase (356 aa).

The region spanning 9–91 (KLEAGFQKLQ…FDPIIEDYHI (83 aa)) is the Phosphagen kinase N-terminal domain. Residue 64-68 (GVGIY) coordinates L-arginine. The Phosphagen kinase C-terminal domain occupies 119–356 (FVISTRVRCG…AELIKLEQSA (238 aa)). Residues 122 to 126 (STRVR) and H185 contribute to the ATP site. Residue E225 participates in L-arginine binding. Position 229 (R229) interacts with ATP. L-arginine is bound at residue C271. ATP contacts are provided by residues 280–284 (RASVH) and 309–314 (RGTRGE). An L-arginine-binding site is contributed by E314.

This sequence belongs to the ATP:guanido phosphotransferase family.

The enzyme catalyses L-arginine + ATP = N(omega)-phospho-L-arginine + ADP + H(+). This Artemia franciscana (Brine shrimp) protein is Arginine kinase (ARGK).